Here is a 365-residue protein sequence, read N- to C-terminus: tRNA 2-selenouridine synthase (365 aa).

The 124-residue stretch at 15 to 138 folds into the Rhodanese domain; sequence FIAGQPLIDL…MRQYLIGVIE (124 aa). The active-site S-selanylcysteine intermediate is the C98.

The protein belongs to the SelU family. Monomer.

It catalyses the reaction 5-methylaminomethyl-2-thiouridine(34) in tRNA + selenophosphate + (2E)-geranyl diphosphate + H2O + H(+) = 5-methylaminomethyl-2-selenouridine(34) in tRNA + (2E)-thiogeraniol + phosphate + diphosphate. The catalysed reaction is 5-methylaminomethyl-2-thiouridine(34) in tRNA + (2E)-geranyl diphosphate = 5-methylaminomethyl-S-(2E)-geranyl-thiouridine(34) in tRNA + diphosphate. It carries out the reaction 5-methylaminomethyl-S-(2E)-geranyl-thiouridine(34) in tRNA + selenophosphate + H(+) = 5-methylaminomethyl-2-(Se-phospho)selenouridine(34) in tRNA + (2E)-thiogeraniol. The enzyme catalyses 5-methylaminomethyl-2-(Se-phospho)selenouridine(34) in tRNA + H2O = 5-methylaminomethyl-2-selenouridine(34) in tRNA + phosphate. Functionally, involved in the post-transcriptional modification of the uridine at the wobble position (U34) of tRNA(Lys), tRNA(Glu) and tRNA(Gln). Catalyzes the conversion of 2-thiouridine (S2U-RNA) to 2-selenouridine (Se2U-RNA). Acts in a two-step process involving geranylation of 2-thiouridine (S2U) to S-geranyl-2-thiouridine (geS2U) and subsequent selenation of the latter derivative to 2-selenouridine (Se2U) in the tRNA chain. The protein is tRNA 2-selenouridine synthase of Shewanella sp. (strain ANA-3).